Reading from the N-terminus, the 1485-residue chain is MIERGKFRSLTLVNWNGFFARTFDLDELVTTLSGGNGAGKSTTMAAFVTALIPDLTLLHFRNTTEAGATSGSRDKGLHGKLRAGVCYSTLDVVNSRHQRVVVGVRLQQVAGRDRKVDIKPFTIQGLPTAIQPTEILTELVAERQARVLSLPELKERVEAMEGVQFKQFNSITDYHSLMFDLGVIPKRLRSSADRSKFYRLIEASLYGGISSAITRSLRDYLLPENSGVRKAFQDMEAALRENRMTLEAIRVTQSDRDLFKHLISEATSYVAADYMRHANERRIHLDSALVLRRDLFSSRKQLVTEQYRHVEMSRELAEQSGAESDLETDYQAASDHLNLVQTAMRQQEKIERYQSDLEELTYRLEEQSEVVSEASEQQADNEARAEAAELEVDELKSQLADYQQALDVQQTRAIQYQQALQALERARALCQLPELTADNAEEWLETFHAKEQEATESLLQLEQKLSVADAAHSQFEQAYQLVVNIAGEVSRSEAWQTARELLRDWPSQQHLAERVQPLRMRLSELEQRLRAQQDAERLLQEFCKRQGNAYQPEELEALQRELESQVEELSLSVSDAGERRMAMRQELEQLKLKIQELTARAPVWLAAQDALSQLSEQSGEALEDSRQVTEYMQQLLERERETTVERDEIAASKRAIEAQIERLSQPSGAEDARLIALAERFGGVLLSEIYDDVTIDDAPYFSALYGPSRHGIVVPDLSLVREHLQGLDDCPEDLYLIEGDPQSFDDSVFAVEEHEKAVVVKIADRQWRYSRYPEVPLFGRAARENRLETLYQERDRLAERYATLSFDVQKTQRTHQAFSRFIGSHLAVAFDADPEAEIRLLNTRRGEIERALNAHEDQNQQQRQQFDQAKEGISALNRLIPLVSLLLDETLTDRVEEITEELAEAQEAARYIQQHGVSLTKLEPLLSVLQSDPQQHEQLQESYVLAQNSQRLAKQQAFALTEVVQRRAHFSYTDSAGMLTENSDLNDKLRQRLEQAEAERTRAREQLRQYQSQFTQYSQVLASLKSSYDAKRDMLKELSQELVDIGVPADANAEARARARRDELHAALSTNRSRRNQLEKQLTFCEAEMDSLQKKLRKLERDYHQIREQVVNAKAGWCAVMRMVKDNGVERRLHRRELAYMDGDELRSMSDKALGALRLAVADNEHLRDVLRLSEDPKRPERKIQFYIAVYQHLRERIRQDIIRTDDPVEAIEQMEIELGRLTEELTAREQKLAISSKSVSNIIRKTIHREQNRIRMLNQGLQAVSFGQVKSVRLNVNVREAHATLLDVLSEQQEQHQDLFNSNRLTFSEALAKLYQRLNPQMDMGQRLPQTIGEELLDYRNYLELEVEVYRGADGWLRAESGALSTGEAIGTGMSILVMVVQSWEEESRRLRGKDISPCRLLFLDEAARLDAKSIATLFELCERLEMQLIIAAPENISPEKGTTYKLVRKVFQNHEHVHVVGLRGFANEMPSLPPIAAELQQGG.

34-41 provides a ligand contact to ATP; sequence GGNGAGKS. 6 coiled-coil regions span residues 337–480, 509–605, 780–805, 835–915, 977–1116, and 1210–1235; these read LNLV…QAYQ, QHLA…PVWL, RAAR…ATLS, EAEI…IQQH, GMLT…AKAG, and EAIE…KLAI. Residues 666–783 form a flexible hinge region; sequence PSGAEDARLI…EVPLFGRAAR (118 aa).

This sequence belongs to the SMC family. MukB subfamily. As to quaternary structure, homodimerization via its hinge domain. Binds to DNA via its C-terminal region. Interacts, and probably forms a ternary complex, with MukE and MukF via its C-terminal region. The complex formation is stimulated by calcium or magnesium. Interacts with tubulin-related protein FtsZ.

It localises to the cytoplasm. The protein localises to the nucleoid. Its function is as follows. Plays a central role in chromosome condensation, segregation and cell cycle progression. Functions as a homodimer, which is essential for chromosome partition. Involved in negative DNA supercoiling in vivo, and by this means organize and compact chromosomes. May achieve or facilitate chromosome segregation by condensation DNA from both sides of a centrally located replisome during cell division. The polypeptide is Chromosome partition protein MukB (Yersinia pestis bv. Antiqua (strain Antiqua)).